Consider the following 705-residue polypeptide: 3-hydroxypropionate--CoA ligase [ADP-forming] (705 aa).

One can recognise an ATP-grasp domain in the interval 25-61 (KSILKNYGVKVPPYALVTSAEEAAKEAKKIGFPLVMK). Residue 51-61 (AKKIGFPLVMK) coordinates ATP.

This sequence in the N-terminal section; belongs to the acetate CoA ligase beta subunit family. In the C-terminal section; belongs to the acetate CoA ligase alpha subunit family. The cofactor is Mg(2+). Requires Mn(2+) as cofactor.

The enzyme catalyses 3-hydroxypropanoate + ATP + CoA = 3-hydroxypropanoyl-CoA + ADP + phosphate. Involved in thaumarchaeal hydroxypropionate/hydroxybutyrate (HP/HB) cycle, a modified version of the autotrophic HP/HB cycle of Crenarchaeota. Catalyzes the formation of 3-hydroxypropionyl-CoA, ADP and phosphate from 3-hydroxypropionate, coenzyme A (CoA) and ATP. Can also use 4-hydroxybutyrate, propionate and butyrate, with poor catalytic efficiency. This chain is 3-hydroxypropionate--CoA ligase [ADP-forming], found in Nitrosopumilus maritimus (strain SCM1).